Here is a 130-residue protein sequence, read N- to C-terminus: T-cell receptor alpha chain V region PHDS58 (130 aa).

The signal sequence occupies residues 1–20 (MLLALLPVLGIHFVLRDAQA). The segment at 21–114 (QSVTQPDARV…SAVYFCAVSG (94 aa)) is v segment. Asn-90 carries an N-linked (GlcNAc...) asparagine glycan. The interval 115-130 (FASALTFGSGTKVIVL) is j segment.

In Mus musculus (Mouse), this protein is T-cell receptor alpha chain V region PHDS58.